A 375-amino-acid polypeptide reads, in one-letter code: Tyrosine--tRNA ligase (375 aa).

Residues Tyr37, Tyr168, Gln172, Asp175, and Gln190 each contribute to the L-tyrosine site. A 'KMSKS' region motif is present at residues 251 to 255 (KMSKS). Lys254 is an ATP binding site.

This sequence belongs to the class-I aminoacyl-tRNA synthetase family. TyrS type 4 subfamily. Homodimer.

It localises to the cytoplasm. The enzyme catalyses tRNA(Tyr) + L-tyrosine + ATP = L-tyrosyl-tRNA(Tyr) + AMP + diphosphate + H(+). Catalyzes the attachment of tyrosine to tRNA(Tyr) in a two-step reaction: tyrosine is first activated by ATP to form Tyr-AMP and then transferred to the acceptor end of tRNA(Tyr). The protein is Tyrosine--tRNA ligase of Pyrococcus furiosus (strain ATCC 43587 / DSM 3638 / JCM 8422 / Vc1).